A 209-amino-acid polypeptide reads, in one-letter code: tRNA (guanine-N(7)-)-methyltransferase (209 aa).

Positions 35, 60, 87, and 113 each coordinate S-adenosyl-L-methionine. The active site involves D113. The substrate site is built by K117 and D149.

Belongs to the class I-like SAM-binding methyltransferase superfamily. TrmB family.

The enzyme catalyses guanosine(46) in tRNA + S-adenosyl-L-methionine = N(7)-methylguanosine(46) in tRNA + S-adenosyl-L-homocysteine. The protein operates within tRNA modification; N(7)-methylguanine-tRNA biosynthesis. Functionally, catalyzes the formation of N(7)-methylguanine at position 46 (m7G46) in tRNA. This Prochlorococcus marinus (strain MIT 9515) protein is tRNA (guanine-N(7)-)-methyltransferase.